The following is a 248-amino-acid chain: NH(3)-dependent NAD(+) synthetase (248 aa).

30 to 37 contacts ATP; that stretch reads GLSGGIDS. Residue aspartate 36 participates in Mg(2+) binding. Arginine 114 provides a ligand contact to deamido-NAD(+). An ATP-binding site is contributed by threonine 134. Glutamate 139 lines the Mg(2+) pocket. The deamido-NAD(+) site is built by lysine 147 and aspartate 154. ATP-binding residues include lysine 163 and threonine 185. 232–233 serves as a coordination point for deamido-NAD(+); that stretch reads HK.

This sequence belongs to the NAD synthetase family. Homodimer.

It catalyses the reaction deamido-NAD(+) + NH4(+) + ATP = AMP + diphosphate + NAD(+) + H(+). It functions in the pathway cofactor biosynthesis; NAD(+) biosynthesis; NAD(+) from deamido-NAD(+) (ammonia route): step 1/1. In terms of biological role, catalyzes the ATP-dependent amidation of deamido-NAD to form NAD. Uses ammonia as a nitrogen source. The polypeptide is NH(3)-dependent NAD(+) synthetase (Mycoplasma genitalium (strain ATCC 33530 / DSM 19775 / NCTC 10195 / G37) (Mycoplasmoides genitalium)).